The primary structure comprises 360 residues: Glutamate 5-kinase (360 aa).

Lys11 is an ATP binding site. Substrate contacts are provided by Ser51, Asp138, and Asn150. Residues 278–356 (KGEIHINECA…GKKPVVHYDY (79 aa)) form the PUA domain.

This sequence belongs to the glutamate 5-kinase family.

It localises to the cytoplasm. The enzyme catalyses L-glutamate + ATP = L-glutamyl 5-phosphate + ADP. It functions in the pathway amino-acid biosynthesis; L-proline biosynthesis; L-glutamate 5-semialdehyde from L-glutamate: step 1/2. In terms of biological role, catalyzes the transfer of a phosphate group to glutamate to form L-glutamate 5-phosphate. The chain is Glutamate 5-kinase from Bacteroides thetaiotaomicron (strain ATCC 29148 / DSM 2079 / JCM 5827 / CCUG 10774 / NCTC 10582 / VPI-5482 / E50).